The following is a 222-amino-acid chain: Collectrin (222 aa).

Residues 1 to 14 (MLWLLFFLVTAIHA) form the signal peptide. Residues 15–141 (ELCQPGAENA…LAPPMDPSVP (127 aa)) are Extracellular-facing. Residues 21 to 222 (AENAFKVRLS…MTEDERLTPL (202 aa)) form the Collectrin-like domain. N76 and N93 each carry an N-linked (GlcNAc...) asparagine glycan. Residues 142–162 (IWIIIFGVIFCIIIVAIALLI) form a helical membrane-spanning segment. Over 163 to 222 (LSGIWQRRRKNKEPSEVDDAEDKCENMITIENGIPSDPLDMKGGHINDAFMTEDERLTPL) the chain is Cytoplasmic. Residues T214 and T220 each carry the phosphothreonine modification.

This sequence belongs to the CLTRN family. In terms of assembly, monomer. Homodimer; dimerization prevents CLTRN cleavage by BACE2. Interacts with SLC6A18; this interaction regulates the trafficking of SLC6A18 to the cell membrane and its amino acid transporter activity. Interacts with SLC6A19; this interaction regulates the trafficking of SLC6A19 to the cell membrane and its amino acid transporter activity. Interacts with SNAPIN. In terms of processing, glycosylated. Glycosylation is required for plasma membrane localization and for its cleavage by BACE2. Post-translationally, proteolytically processed in pancreatic beta cells by BACE2 leading to the generation and extracellular release of soluble CLTRN, and a corresponding cell-associated C-terminal fragment which is later cleaved by gamma-secretase. This shedding process inactivates CLTRN. Three cleavage sites have been identified for BACE2, two clustered sites after Phe-116 and Leu-118 and a more membrane proximal site at Phe-125; the preferred BACE2 cleavage site seems to be between Phe-125 and Leu-126, Phe-116 and Leu-118 act as alternative sites. In terms of tissue distribution, kidney; collecting ducts. Pancreas; beta cells of islets.

The protein resides in the cell membrane. Its function is as follows. Plays an important role in amino acid transport by acting as binding partner of amino acid transporters SLC6A18 and SLC6A19, regulating their trafficking on the cell surface and their amino acid transporter activity. May also play a role in trafficking of amino acid transporters SLC3A1 and SLC7A9 to the renal cortical cell membrane. Regulator of SNARE complex function. Stimulator of beta cell replication. In Homo sapiens (Human), this protein is Collectrin.